A 140-amino-acid chain; its full sequence is MSSRSIMGFDYGTKSIGVAIGQELTGTAQPLRAIKANDGVPNWDDIEKLLKEWQPDLLVVGLPLNMDGTEQEITVRARKFGNRLHGRFGKQVEFKDERLTTTDARARLFERGGYKALDKGSVDGVSAQLILEAWMEEQYG.

It belongs to the YqgF nuclease family.

It localises to the cytoplasm. Functionally, could be a nuclease involved in processing of the 5'-end of pre-16S rRNA. In Aeromonas salmonicida (strain A449), this protein is Putative pre-16S rRNA nuclease.